Consider the following 952-residue polypeptide: Isoleucine--tRNA ligase (952 aa).

The 'HIGH' region signature appears at proline 60–histidine 70. Glutamate 562 is a binding site for L-isoleucyl-5'-AMP. The 'KMSKS' region signature appears at lysine 603–serine 607. Lysine 606 contacts ATP. Zn(2+) contacts are provided by cysteine 921, cysteine 924, cysteine 941, and cysteine 944.

This sequence belongs to the class-I aminoacyl-tRNA synthetase family. IleS type 1 subfamily. In terms of assembly, monomer. Requires Zn(2+) as cofactor.

The protein resides in the cytoplasm. The catalysed reaction is tRNA(Ile) + L-isoleucine + ATP = L-isoleucyl-tRNA(Ile) + AMP + diphosphate. In terms of biological role, catalyzes the attachment of isoleucine to tRNA(Ile). As IleRS can inadvertently accommodate and process structurally similar amino acids such as valine, to avoid such errors it has two additional distinct tRNA(Ile)-dependent editing activities. One activity is designated as 'pretransfer' editing and involves the hydrolysis of activated Val-AMP. The other activity is designated 'posttransfer' editing and involves deacylation of mischarged Val-tRNA(Ile). The polypeptide is Isoleucine--tRNA ligase (Microcystis aeruginosa (strain NIES-843 / IAM M-2473)).